The following is a 356-amino-acid chain: MPPPKKFRVQAKNYFLTYPQCSLTKDEALSQLQNLETPVNKKFIKICRELHENGEPHLHVLIQFEGKYQCTNNRFFDLVSPTRSAHFHPNIQGAKSSSDVKSYIDKDGDTAEWGEFQIDGRSARGGQQTANDSYAKALNAGDVQSALNILKEEQPKDYVLQNHNIRSNLERIFAKAPEPWVPRFPLSSFTAVPEEMQEWADDYFGSGSAARPDRPLSLIVEGDSRTGKTMWARALGPHNYLSGHLDFNGRVYSNEVEYNVIDDVAPHYLKLKHWKELLGAQKDWQSNCKYGKPVQIKGGIPAIVLCNPGEGSSYKEYLDKEENTGLRNWTLKNAIFITLTAPLYQEGTQAGQEEGH.

A CRESS-DNA virus Rep endonuclease domain is found at 8–116 (RVQAKNYFLT…DGDTAEWGEF (109 aa)). Positions 15 to 18 (FLTY) match the RCR-1 motif. Glutamate 49, histidine 57, and histidine 59 together coordinate a divalent metal cation. The RCR-2 motif lies at 57 to 59 (HLH). The active-site For DNA cleavage activity is tyrosine 103. The RCR-3 motif lies at 103 to 106 (YIDK). Aspartate 107 serves as a coordination point for a divalent metal cation. Residues 143 to 153 (VQSALNILKEE) form a binding to RBR1 region. Positions 156-176 (KDYVLQNHNIRSNLERIFAKA) are oligomerization. 221 to 228 (EGDSRTGK) serves as a coordination point for ATP.

Belongs to the geminiviridae Rep protein family. In terms of assembly, homooligomer. Interacts with the replication enhancer protein (REn). Interacts with host retinoblastoma-related protein 1 (RBR1), and may thereby induce the transcription of host replicative enzymes even if the cell is not dividing anymore. Interacts with host PCNA. Interacts with host SCE1 protein. Mg(2+) is required as a cofactor. It depends on Mn(2+) as a cofactor.

The protein localises to the host nucleus. Essential for the replication of viral ssDNA. The closed circular ssDNA genome is first converted to a superhelical dsDNA. Rep binds a specific region at the genome origin of replication. It introduces an endonucleolytic nick within the conserved sequence 5'-TAATATTAC-3' in the intergenic region of the genome present in all geminiviruses, thereby initiating the rolling circle replication (RCR). Following cleavage, binds covalently to the 5'-phosphate of DNA as a tyrosyl ester. The cleavage gives rise to a free 3'-OH that serves as a primer for the cellular DNA polymerase. The polymerase synthesizes the (+) strand DNA by rolling circle mechanism. After one round of replication, a Rep-catalyzed nucleotidyl transfer reaction releases a circular single-stranded virus genome, thereby terminating the replication. Displays origin-specific DNA cleavage, nucleotidyl transferase, ATPase and helicase activities. The sequence is that of Replication-associated protein from Abutilon (Upland cotton).